Reading from the N-terminus, the 459-residue chain is Carbonic anhydrase 9 (459 aa).

The signal sequence occupies residues 1–37 (MAPLCPSPWLPLLIPAPAPGLTVQLLLSLLLLVPVHP). The proteoglycan-like (PG) stretch occupies residues 38-112 (QRLPRMQEDS…EEEGSLKLED (75 aa)). Residues 38–414 (QRLPRMQEDS…QLNSCLAAGD (377 aa)) lie on the Extracellular side of the membrane. Residues 42–154 (RMQEDSPLGG…GDPPWPRVSP (113 aa)) form a disordered region. Over residues 55–95 (GEDDPLGEEDLPSEEDSPREEDPPGEEDLPGEEDLPGEEDL) the composition is skewed to acidic residues. Residues 96 to 112 (PEVKPKSEEEGSLKLED) show a composition bias toward basic and acidic residues. O-linked (GlcNAc...) threonine glycosylation is present at threonine 115. Positions 129–140 (AHRDKEGDDQSH) are enriched in basic and acidic residues. Positions 138 to 391 (QSHWRYGGDP…NGRVIEASFP (254 aa)) are catalytic. Residues 139–390 (SHWRYGGDPP…LNGRVIEASF (252 aa)) form the Alpha-carbonic anhydrase domain. Cysteine 156 and cysteine 336 are disulfide-bonded. Histidine 200 acts as the Proton donor/acceptor in catalysis. The Zn(2+) site is built by histidine 226, histidine 228, and histidine 251. Position 332 to 333 (332 to 333 (TT)) interacts with substrate. Asparagine 346 carries N-linked (GlcNAc...) asparagine glycosylation. The chain crosses the membrane as a helical span at residues 415–435 (ILALVFGLLFAVTSVAFLVQM). Over 436 to 459 (RRQHRRGTKGGVSYRPAEVAETGA) the chain is Cytoplasmic. At tyrosine 449 the chain carries Phosphotyrosine.

The protein belongs to the alpha-carbonic anhydrase family. In terms of assembly, forms oligomers linked by disulfide bonds. Zn(2+) is required as a cofactor. In terms of processing, asn-346 bears high-mannose type glycan structures. As to expression, expressed primarily in carcinoma cells lines. Expression is restricted to very few normal tissues and the most abundant expression is found in the epithelial cells of gastric mucosa.

The protein localises to the nucleus. The protein resides in the nucleolus. Its subcellular location is the cell membrane. It is found in the cell projection. It localises to the microvillus membrane. The catalysed reaction is hydrogencarbonate + H(+) = CO2 + H2O. With respect to regulation, inhibited by coumarins, saccharin, sulfonamide derivatives such as acetazolamide (AZA) and Foscarnet (phosphonoformate trisodium salt). In terms of biological role, catalyzes the interconversion between carbon dioxide and water and the dissociated ions of carbonic acid (i.e. bicarbonate and hydrogen ions). This Homo sapiens (Human) protein is Carbonic anhydrase 9 (CA9).